The following is a 246-amino-acid chain: Large ribosomal subunit protein uL3 (246 aa).

2 disordered regions span residues 140-162 and 215-246; these read SHRSIGSTGGRQDPGKTFKNKKM and DVPLPGKFRENGSAGASQVEAAPEAPASEENA. N5-methylglutamine is present on Gln151. The span at 234–246 shows a compositional bias: low complexity; the sequence is EAAPEAPASEENA.

It belongs to the universal ribosomal protein uL3 family. Part of the 50S ribosomal subunit. Forms a cluster with proteins L14 and L19. In terms of processing, methylated by PrmB.

Its function is as follows. One of the primary rRNA binding proteins, it binds directly near the 3'-end of the 23S rRNA, where it nucleates assembly of the 50S subunit. This chain is Large ribosomal subunit protein uL3, found in Methylorubrum populi (strain ATCC BAA-705 / NCIMB 13946 / BJ001) (Methylobacterium populi).